The chain runs to 199 residues: Chaperone protein TorD (199 aa).

Belongs to the TorD/DmsD family. TorD subfamily.

It is found in the cytoplasm. Its function is as follows. Involved in the biogenesis of TorA. Acts on TorA before the insertion of the molybdenum cofactor and, as a result, probably favors a conformation of the apoenzyme that is competent for acquiring the cofactor. This is Chaperone protein TorD from Actinobacillus pleuropneumoniae serotype 7 (strain AP76).